Reading from the N-terminus, the 184-residue chain is ATP synthase subunit delta (184 aa).

Belongs to the ATPase delta chain family. As to quaternary structure, F-type ATPases have 2 components, F(1) - the catalytic core - and F(0) - the membrane proton channel. F(1) has five subunits: alpha(3), beta(3), gamma(1), delta(1), epsilon(1). F(0) has three main subunits: a(1), b(2) and c(10-14). The alpha and beta chains form an alternating ring which encloses part of the gamma chain. F(1) is attached to F(0) by a central stalk formed by the gamma and epsilon chains, while a peripheral stalk is formed by the delta and b chains.

It is found in the cell inner membrane. In terms of biological role, f(1)F(0) ATP synthase produces ATP from ADP in the presence of a proton or sodium gradient. F-type ATPases consist of two structural domains, F(1) containing the extramembraneous catalytic core and F(0) containing the membrane proton channel, linked together by a central stalk and a peripheral stalk. During catalysis, ATP synthesis in the catalytic domain of F(1) is coupled via a rotary mechanism of the central stalk subunits to proton translocation. This protein is part of the stalk that links CF(0) to CF(1). It either transmits conformational changes from CF(0) to CF(1) or is implicated in proton conduction. In Rickettsia peacockii (strain Rustic), this protein is ATP synthase subunit delta.